A 199-amino-acid polypeptide reads, in one-letter code: Transcriptional regulatory protein EntR (199 aa).

A Response regulatory domain is found at 3–124 (KILVIDRCHF…TLSHTIQEAL (122 aa)). Position 8 is a 4-aspartylphosphate (Asp-8). The HTH luxR-type domain occupies 133-198 (PKNATPLLTP…SPFLSLPGKG (66 aa)). The H-T-H motif DNA-binding region spans 157–176 (NNAIAAALSIHGKTVYTYKR).

In terms of biological role, may serve to repress the entericidin locus in C.freundii. The sequence is that of Transcriptional regulatory protein EntR (ecnR) from Citrobacter freundii.